The primary structure comprises 70 residues: Phycocyanin-645 alpha-2 chain (70 aa).

R16 contacts (2R,3E)-phycocyanobilin. 3 residues coordinate mesobiliverdin: C18, Y26, and K41.

The protein belongs to the phycoerythrin family. In terms of assembly, heterotetramer of 2 different alpha chains and 2 identical beta chains which form 2 alpha-beta heterodimers within the heterotetramer. In terms of processing, contains one phycocyanobilin chromophore, one mesobiliverdin chromophore and one 15,16-dihydrobiliverdin chromophore with binding mediated by both the alpha and beta subunits.

Its subcellular location is the plastid. It is found in the chloroplast thylakoid membrane. Functionally, light-harvesting photosynthetic tetrapyrrole chromophore-protein from the phycobiliprotein complex. The protein is Phycocyanin-645 alpha-2 chain of Chroomonas sp.